We begin with the raw amino-acid sequence, 95 residues long: Aspartyl/glutamyl-tRNA(Asn/Gln) amidotransferase subunit C (95 aa).

It belongs to the GatC family. Heterotrimer of A, B and C subunits.

It carries out the reaction L-glutamyl-tRNA(Gln) + L-glutamine + ATP + H2O = L-glutaminyl-tRNA(Gln) + L-glutamate + ADP + phosphate + H(+). It catalyses the reaction L-aspartyl-tRNA(Asn) + L-glutamine + ATP + H2O = L-asparaginyl-tRNA(Asn) + L-glutamate + ADP + phosphate + 2 H(+). Allows the formation of correctly charged Asn-tRNA(Asn) or Gln-tRNA(Gln) through the transamidation of misacylated Asp-tRNA(Asn) or Glu-tRNA(Gln) in organisms which lack either or both of asparaginyl-tRNA or glutaminyl-tRNA synthetases. The reaction takes place in the presence of glutamine and ATP through an activated phospho-Asp-tRNA(Asn) or phospho-Glu-tRNA(Gln). The protein is Aspartyl/glutamyl-tRNA(Asn/Gln) amidotransferase subunit C of Pelobacter propionicus (strain DSM 2379 / NBRC 103807 / OttBd1).